Here is a 513-residue protein sequence, read N- to C-terminus: MSDYSLKHSVTQYLEEIPQQVQNRLYTSPATCLAIYRILPPLAKFFIMAMVFNENEVPLLDLDKWVNSNGKLQFQNAIKSMKSLHLLIPNKSSGTLMINLNPTFKISLRNALTGGEVQNSFGVVVEENVVSLDLLDEYSANKWETILHFMVGTPLAKIPSEKVLNLLKHSKLMEEVNSTGEFKITNEGFQFLLQEINSQLWTLLLQYLKMIETSKMDLVDVLHFIFMLGALEVGKAYKIDALSETQRIMLQDMRDYGLVFQKHSNDSIFYPTKLALMLTSDTKTIRSASNAMDSVLRQNREEPSVNEDGANGKSTTDITTSDDLNKAGLKNQDIPDGSLIVETNFKIYSYSNSPLQIAVLSLFVHLKARFVNMVLGQITRESIRRALTNGITADQIIAYLETHAHPQMRRLAEEKLEKKLELDPNCKEPLQVLPPTVVDQIRLWQLELDRVITYEGSLYSDFETSQEYNLLSKYAQDIGVLLWKDDKKKKFFISKEGNSQVLDFAKRKLKKKQ.

The interval 296 to 319 (LRQNREEPSVNEDGANGKSTTDIT) is disordered.

Belongs to the TFB2 family. Component of the 7-subunit TFIIH core complex composed of XPB/SSL2, XPD/RAD3, SSL1, TFB1, TFB2, TFB4 and TFB5, which is active in NER. The core complex associates with the 3-subunit CTD-kinase module TFIIK composed of CCL1, KIN28 and TFB3 to form the 10-subunit holoenzyme (holo-TFIIH) active in transcription. An additionnal subunit, TFB6, plays a role in the dissociation of the SSL2 helicase from TFIIH after transcription initiation. Interacts with TFB5.

The protein resides in the nucleus. Functionally, component of the general transcription and DNA repair factor IIH (TFIIH) core complex, which is involved in general and transcription-coupled nucleotide excision repair (NER) of damaged DNA and, when complexed to TFIIK, in RNA transcription by RNA polymerase II. In NER, TFIIH acts by opening DNA around the lesion to allow the excision of the damaged oligonucleotide and its replacement by a new DNA fragment. In transcription, TFIIH has an essential role in transcription initiation. When the pre-initiation complex (PIC) has been established, TFIIH is required for promoter opening and promoter escape. Phosphorylation of the C-terminal tail (CTD) of the largest subunit of RNA polymerase II by the kinase module TFIIK controls the initiation of transcription. In Saccharomyces cerevisiae (strain ATCC 204508 / S288c) (Baker's yeast), this protein is General transcription and DNA repair factor IIH subunit TFB2 (TFB2).